The chain runs to 283 residues: 4-diphosphocytidyl-2-C-methyl-D-erythritol kinase (283 aa).

Residue lysine 8 is part of the active site. Residue 90-100 (PIGSGLAGGSS) coordinates ATP. Residue aspartate 132 is part of the active site.

It belongs to the GHMP kinase family. IspE subfamily.

It carries out the reaction 4-CDP-2-C-methyl-D-erythritol + ATP = 4-CDP-2-C-methyl-D-erythritol 2-phosphate + ADP + H(+). It participates in isoprenoid biosynthesis; isopentenyl diphosphate biosynthesis via DXP pathway; isopentenyl diphosphate from 1-deoxy-D-xylulose 5-phosphate: step 3/6. Catalyzes the phosphorylation of the position 2 hydroxy group of 4-diphosphocytidyl-2C-methyl-D-erythritol. This is 4-diphosphocytidyl-2-C-methyl-D-erythritol kinase from Chlamydia muridarum (strain MoPn / Nigg).